Consider the following 597-residue polypeptide: Aspartate--tRNA(Asp/Asn) ligase (597 aa).

Glu-182 provides a ligand contact to L-aspartate. The segment at 206-209 is aspartate; that stretch reads QLFK. Residue Arg-228 participates in L-aspartate binding. Residues 228–230 and Gln-237 each bind ATP; that span reads RDE. His-456 contacts L-aspartate. Residue Glu-490 coordinates ATP. Arg-497 is an L-aspartate binding site. An ATP-binding site is contributed by 542-545; the sequence is GFDR.

It belongs to the class-II aminoacyl-tRNA synthetase family. Type 1 subfamily. As to quaternary structure, homodimer.

It localises to the cytoplasm. It carries out the reaction tRNA(Asx) + L-aspartate + ATP = L-aspartyl-tRNA(Asx) + AMP + diphosphate. Its function is as follows. Aspartyl-tRNA synthetase with relaxed tRNA specificity since it is able to aspartylate not only its cognate tRNA(Asp) but also tRNA(Asn). Reaction proceeds in two steps: L-aspartate is first activated by ATP to form Asp-AMP and then transferred to the acceptor end of tRNA(Asp/Asn). This chain is Aspartate--tRNA(Asp/Asn) ligase, found in Desulfatibacillum aliphaticivorans.